The following is an 805-amino-acid chain: Cell division cycle protein 48 homolog (805 aa).

Residues 249 to 256 (GPPGSGKT) and 522 to 529 (GPPGCGKT) each bind ATP. Positions 783-805 (GATAAADPFATSNAAADDDDLYS) are disordered.

The protein belongs to the AAA ATPase family.

Its function is as follows. Probably functions in cell division and growth processes. The chain is Cell division cycle protein 48 homolog (CAFP) from Capsicum annuum (Capsicum pepper).